Reading from the N-terminus, the 209-residue chain is MGNGKSIAGDQKAVPTQETHVWYRTFMMEYPSGLQTLHEFKTLLGLQGLNQKANKHIDQVYNTFDTNKDGFVDFLEFIAAVNLIMQEKMEQKLKWYFKLYDADGNGSIDKNELLDMFMAVQALNGQQTLSPEEFINLVFHKIDINNDGELTLEEFINGMAKDQDLLEIVYKSFDFSNVLRVICNGKQPDMETDSSKSPDKAGLGKVKMK.

G2 is lipidated: N-myristoyl glycine. At N3 the chain carries Deamidated asparagine. EF-hand domains follow at residues 15–50 (PTQETHVWYRTFMMEYPSGLQTLHEFKTLLGLQGLN), 52–87 (KANKHIDQVYNTFDTNKDGFVDFLEFIAAVNLIMQE), 88–123 (KMEQKLKWYFKLYDADGNGSIDKNELLDMFMAVQAL), and 130–165 (SPEEFINLVFHKIDINNDGELTLEEFINGMAKDQDL). Ca(2+)-binding residues include D65, N67, D69, E76, D101, D103, N105, S107, E112, D143, N145, D147, E149, and E154. The interval 187-209 (QPDMETDSSKSPDKAGLGKVKMK) is disordered.

Retina.

Stimulates guanylyl cyclase 1 (GC1) and GC2 when free calcium ions concentration is low and inhibits guanylyl cyclases when free calcium ions concentration is elevated. This Ca(2+)-sensitive regulation of guanylyl cyclase (GC) is a key event in recovery of the dark state of rod photoreceptors following light exposure. In Homo sapiens (Human), this protein is Guanylyl cyclase-activating protein 3 (GUCA1C).